The chain runs to 273 residues: Nickel permease LarQ (273 aa).

The next 5 membrane-spanning stretches (helical) occupy residues 64–84 (LIQLLLLVILIALSNNLILLW), 117–137 (MLFVLPSYWLAGPTTLLFFGL), 159–179 (LAGLKALHCPDLLIMTLAIAI), 210–230 (LIGALFGNLYLKSYTYALELY), and 251–271 (HWRDYLALSPAIIVWILFIFW).

Belongs to the CbiQ family. As to quaternary structure, may form an energy-coupling factor (ECF) transporter complex composed of an ATP-binding protein (A component, LarO), a transmembrane protein (T component, LarQ) and a fused possible substrate-capture protein (S component, LarMN) of unknown stoichiometry.

It localises to the cell membrane. In terms of biological role, probable transmembrane component of the energy-coupling factor (ECF) transporter complex LarMNQO involved in nickel import. This Lactiplantibacillus plantarum (strain ATCC BAA-793 / NCIMB 8826 / WCFS1) (Lactobacillus plantarum) protein is Nickel permease LarQ.